The chain runs to 94 residues: Enhancer of yellow 2 transcription factor (94 aa).

This sequence belongs to the ENY2 family. In terms of assembly, component of the nuclear pore complex (NPC)-associated AMEX complex (anchoring and mRNA export complex), composed of at least e(y)2 and xmas-2. Component of the SAGA transcription coactivator-HAT complexes, at least composed of Ada2b, e(y)2, Pcaf/Gcn5, Taf10 and Nipped-A/Trrap. Within the SAGA complex, e(y)2, Sgf11, and not/nonstop form an additional subcomplex of SAGA called the DUB module (deubiquitination module). Component of the THO complex, composed of at least e(y)2, HPR1, THO2, THOC5, THOC6 and THOC7. Interacts with e(y)1. Interacts with su(Hw) (via zinc fingers). Interacts with xmas-2; required for localization to the nuclear periphery. Interacts with the nuclear pore complex (NPC).

The protein localises to the nucleus. The protein resides in the nucleoplasm. It is found in the cytoplasm. Involved in mRNA export coupled transcription activation by association with both the AMEX and the SAGA complexes. The SAGA complex is a multiprotein complex that activates transcription by remodeling chromatin and mediating histone acetylation and deubiquitination. Within the SAGA complex, participates in a subcomplex that specifically deubiquitinates histone H2B. The SAGA complex is recruited to specific gene promoters by activators, where it is required for transcription. Required for nuclear receptor-mediated transactivation. Involved in transcription elongation by recruiting the THO complex onto nascent mRNA. The AMEX complex functions in docking export-competent ribonucleoprotein particles (mRNPs) to the nuclear entrance of the nuclear pore complex (nuclear basket). AMEX participates in mRNA export and accurate chromatin positioning in the nucleus by tethering genes to the nuclear periphery. The chain is Enhancer of yellow 2 transcription factor from Drosophila mojavensis (Fruit fly).